A 608-amino-acid polypeptide reads, in one-letter code: Albumin 2 (608 aa).

The first 14 residues, 1–14, serve as a signal peptide directing secretion; the sequence is MQWLSVCSLLVLLS. Residues 15–18 constitute a propeptide that is removed on maturation; that stretch reads VLSR. Albumin domains lie at 19-205, 206-398, and 402-600; these read SQAQ…TFQH, AIAK…AGSD, and KITD…KLVS. Cystine bridges form between cysteine 26/cysteine 72, cysteine 71/cysteine 80, cysteine 93/cysteine 108, cysteine 107/cysteine 118, cysteine 142/cysteine 187, cysteine 186/cysteine 195, cysteine 218/cysteine 264, cysteine 263/cysteine 271, cysteine 283/cysteine 299, cysteine 298/cysteine 309, cysteine 336/cysteine 381, cysteine 380/cysteine 389, cysteine 414/cysteine 460, cysteine 459/cysteine 471, cysteine 484/cysteine 500, cysteine 499/cysteine 510, cysteine 537/cysteine 582, and cysteine 581/cysteine 590. The N-linked (GlcNAc...) asparagine glycan is linked to asparagine 501.

Belongs to the ALB/AFP/VDB family. In terms of tissue distribution, plasma.

It localises to the secreted. In terms of biological role, binds water, Ca(2+), Na(+), K(+), fatty acids, hormones, bilirubin and drugs. Its main function is the regulation of the colloidal osmotic pressure of blood. This is Albumin 2 (alb2) from Salmo salar (Atlantic salmon).